Here is a 447-residue protein sequence, read N- to C-terminus: Glyceraldehyde-3-phosphate dehydrogenase GAPB, chloroplastic (447 aa).

The transit peptide at 1-80 (MATHAALAVS…STPVRGETVA (80 aa)) directs the protein to the chloroplast. Residues 91 to 92 (RI), Asp-115, and Arg-160 each bind NADP(+). D-glyceraldehyde 3-phosphate-binding positions include 234-236 (SCT), Thr-265, Arg-280, 293-294 (TG), and Arg-316. Cys-235 serves as the catalytic Nucleophile. Asn-399 is an NADP(+) binding site.

The protein belongs to the glyceraldehyde-3-phosphate dehydrogenase family. Tetramer of either four A chains (GAPDH 2) or two A and two B chains (GAPDH 1). In terms of tissue distribution, expressed in leaves and stems.

It is found in the plastid. The protein localises to the chloroplast membrane. Its subcellular location is the chloroplast stroma. The catalysed reaction is D-glyceraldehyde 3-phosphate + phosphate + NADP(+) = (2R)-3-phospho-glyceroyl phosphate + NADPH + H(+). Its pathway is carbohydrate biosynthesis; Calvin cycle. Functionally, involved in the photosynthetic reductive pentose phosphate pathway (Calvin-Benson cycle). Catalyzes the reduction of 1,3-diphosphoglycerate by NADPH. The protein is Glyceraldehyde-3-phosphate dehydrogenase GAPB, chloroplastic (GAPB) of Arabidopsis thaliana (Mouse-ear cress).